The sequence spans 834 residues: Taste receptor type 1 member 2 (834 aa).

The signal sequence occupies residues 1 to 19 (MGPRARTVCFLFFLLWVLA). Residues 20–561 (ELAENSDFHL…SFLEWHEAAT (542 aa)) lie on the Extracellular side of the membrane. Asn-84, Asn-292, Asn-312, Asn-363, Asn-423, Asn-482, and Asn-522 each carry an N-linked (GlcNAc...) asparagine glycan. Residues 562 to 582 (IAVALLAALGFLXXXXXXXXX) form a helical membrane-spanning segment. Topologically, residues 583–597 (XXXXXXPMVRSAGGP) are cytoplasmic. The chain crosses the membrane as a helical span at residues 598–618 (MCFLMLTLLLVAYMVVPVYVG). At 619–630 (PPKVTTCLCRQA) the chain is on the extracellular side. Residues 631–651 (LFPVCFTICISCITMRSFQIV) traverse the membrane as a helical segment. Over 652–676 (CVFKMASRFPRAYSYWVRYQGSYVS) the chain is Cytoplasmic. The chain crosses the membrane as a helical span at residues 677–697 (VAFITALKVVTVVISLLATGL). Over 698 to 722 (NPTTRADTDDPKIMIISCNPNYRNS) the chain is Extracellular. A helical membrane pass occupies residues 723–743 (LLFNTSLDLLLSVVGFSFAYM). Over 744 to 755 (GKELPTNYNEAK) the chain is Cytoplasmic. The chain crosses the membrane as a helical span at residues 756–776 (FITFSMTFYFTSSVSLCTFMS). The Extracellular portion of the chain corresponds to 777-779 (VYD). Residues 780-800 (GVLVTIVDLLVTVFNLLAISL) form a helical membrane-spanning segment. At 801–834 (GYFGPKCYMILFYPERNTPAYFNSMIQGYTMRRD) the chain is on the cytoplasmic side.

The protein belongs to the G-protein coupled receptor 3 family. TAS1R subfamily. As to quaternary structure, forms heterodimers with TAS1R3.

It is found in the cell membrane. In terms of biological role, putative taste receptor. TAS1R2/TAS1R3 recognizes diverse natural and synthetic sweeteners. The chain is Taste receptor type 1 member 2 (TAS1R2) from Cebuella pygmaea (Pygmy marmoset).